Consider the following 393-residue polypeptide: Thermostable carboxypeptidase 2 (393 aa).

Zn(2+)-binding residues include H104, D109, and H245. Residue Y302 is the Proton donor of the active site. E373 functions as the Nucleophile in the catalytic mechanism.

Belongs to the peptidase M20 family. As to quaternary structure, homotetramer. Zn(2+) is required as a cofactor.

Its function is as follows. Can release basic, acidic, aromatic, and, to a lesser extent, aliphatic amino acids. The protein is Thermostable carboxypeptidase 2 (cpsA2) of Saccharolobus solfataricus (strain ATCC 35092 / DSM 1617 / JCM 11322 / P2) (Sulfolobus solfataricus).